Reading from the N-terminus, the 311-residue chain is Taste receptor type 2 member 9 (311 aa).

At methionine 1–tyrosine 9 the chain is on the extracellular side. The chain crosses the membrane as a helical span at residues isoleucine 10 to cysteine 32. Residues isoleucine 33–alanine 52 are Cytoplasmic-facing. Residues isoleucine 53–phenylalanine 72 traverse the membrane as a helical segment. Over proline 73–aspartate 86 the chain is Extracellular. Residues alanine 87–leucine 109 traverse the membrane as a helical segment. Topologically, residues lysine 110–lysine 128 are cytoplasmic. The helical transmembrane segment at valine 129 to phenylalanine 146 threads the bilayer. The Extracellular segment spans residues proline 147–glutamine 179. Asparagine 163 is a glycosylation site (N-linked (GlcNAc...) asparagine). A helical membrane pass occupies residues leucine 180–phenylalanine 202. Residues serine 203 to valine 233 are Cytoplasmic-facing. Residues isoleucine 234 to isoleucine 256 form a helical membrane-spanning segment. The Extracellular segment spans residues proline 257–lysine 260. Residues leucine 261 to methionine 283 traverse the membrane as a helical segment. The Cytoplasmic portion of the chain corresponds to glycine 284–proline 311.

This sequence belongs to the G-protein coupled receptor T2R family.

Its subcellular location is the membrane. Gustducin-coupled receptor implicated in the perception of bitter compounds in the oral cavity and the gastrointestinal tract. Signals through PLCB2 and the calcium-regulated cation channel TRPM5. The polypeptide is Taste receptor type 2 member 9 (TAS2R9) (Macaca mulatta (Rhesus macaque)).